A 576-amino-acid chain; its full sequence is MAGUK p55 subfamily member 7 (576 aa).

2 consecutive L27 domains span residues 10-64 (SEMG…EDCA) and 65-122 (PTPV…YDPE). A PDZ domain is found at 139 to 220 (IIRLVKNKEP…AITFKVVPGI (82 aa)). Positions 228–298 (EPKMFIKALF…PSKHFQERRL (71 aa)) constitute an SH3 domain. In terms of domain architecture, Guanylate kinase-like spans 368 to 560 (HRLVVLVGPT…AFSELKQALK (193 aa)).

The protein belongs to the MAGUK family.

It localises to the membrane. It is found in the cell junction. The protein localises to the tight junction. Its subcellular location is the adherens junction. Its function is as follows. Acts as an important adapter that promotes epithelial cell polarity and tight junction formation. Involved in the assembly of protein complexes at sites of cell-cell contact. The polypeptide is MAGUK p55 subfamily member 7 (mpp7) (Danio rerio (Zebrafish)).